We begin with the raw amino-acid sequence, 274 residues long: F-actin-capping protein subunit alpha (274 aa).

The protein belongs to the F-actin-capping protein alpha subunit family. As to quaternary structure, heterodimer of an alpha and a beta subunit.

It localises to the cytoplasm. F-actin-capping proteins bind in a Ca(2+)-independent manner to the fast growing ends of actin filaments (barbed end) thereby blocking the exchange of subunits at these ends. Unlike other capping proteins (such as gelsolin and severin), these proteins do not sever actin filaments. The chain is F-actin-capping protein subunit alpha from Chaetomium thermophilum (strain DSM 1495 / CBS 144.50 / IMI 039719) (Thermochaetoides thermophila).